A 33-amino-acid polypeptide reads, in one-letter code: U1-pseudomyrmecitoxin-Pt1 subunit LS2 (33 aa).

This sequence belongs to the myrmexin family. Heterodimer composed of subunit LS2 and subunit SS1, heterodimer composed of subunit LS2 and SS2, and heterodimer composed of subunit LS2 and SS3; disulfide-linked. As to expression, expressed by the venom gland.

It is found in the secreted. Its function is as follows. This heterodimer may have anti-inflammatory properties, since the myrmexin complex (composed of 6 SS-LS heterodimers) inhibits carrageenin-induced edema in a dose-dependent manner (after subcutaneous injection into rats). The polypeptide is U1-pseudomyrmecitoxin-Pt1 subunit LS2 (Pseudomyrmex triplarinus (Ant)).